The primary structure comprises 153 residues: Hemoglobin-3 (153 aa).

S2 is modified (N-acetylserine). In terms of domain architecture, Globin spans 4–150 (GLTGPQKAAL…ICRVQGDFMK (147 aa)). Residue H99 participates in heme b binding.

Belongs to the globin family. As to quaternary structure, homotetramer.

The protein localises to the cytoplasm. The protein is Hemoglobin-3 of Phacoides pectinatus (Thick lucine).